A 283-amino-acid polypeptide reads, in one-letter code: Polyamine aminopropyltransferase (283 aa).

Residues 5–238 enclose the PABS domain; it reads PTWIDEYHKG…GIWSWTFASD (234 aa). Glutamine 32 lines the S-methyl-5'-thioadenosine pocket. The spermidine site is built by histidine 63 and aspartate 87. S-methyl-5'-thioadenosine-binding positions include glutamate 107 and 139–140; that span reads DG. Aspartate 158 serves as the catalytic Proton acceptor. 158 to 161 contributes to the spermidine binding site; sequence DCSD.

Belongs to the spermidine/spermine synthase family. As to quaternary structure, homodimer or homotetramer.

It localises to the cytoplasm. It catalyses the reaction S-adenosyl 3-(methylsulfanyl)propylamine + putrescine = S-methyl-5'-thioadenosine + spermidine + H(+). It participates in amine and polyamine biosynthesis; spermidine biosynthesis; spermidine from putrescine: step 1/1. In terms of biological role, catalyzes the irreversible transfer of a propylamine group from the amino donor S-adenosylmethioninamine (decarboxy-AdoMet) to putrescine (1,4-diaminobutane) to yield spermidine. In Prochlorococcus marinus subsp. pastoris (strain CCMP1986 / NIES-2087 / MED4), this protein is Polyamine aminopropyltransferase.